Consider the following 684-residue polypeptide: Kelch repeat and BTB domain-containing protein 7 (684 aa).

Residues 1 to 27 (MQSREDVPRSRRLASPRGGRRPKRISK) form a disordered region. Residues 10–26 (SRRLASPRGGRRPKRIS) are compositionally biased toward basic residues. Ser29 is modified (phosphoserine). Residues 63–138 (CDVTIEVVTP…CYTGRVSLSE (76 aa)) enclose the BTB domain. Kelch repeat units follow at residues 386 to 435 (AVCV…YLNG), 436 to 484 (YIYI…VVQN), 486 to 523 (LYAVNSKRMLCYDPSHNMWLNCASLKRSDFQEACVFND), 524 to 564 (EIYC…IVNH), and 567 to 616 (KLLL…CLCA). Residues 630-666 (ITEEDDARSESSTEWDLDGFSELDSESGSSSSFSDDE) are disordered. A compositionally biased stretch (acidic residues) spans 631–654 (TEEDDARSESSTEWDLDGFSELDS). The ATG8 interaction motif (AIM) motif lies at 668 to 671 (WVQV).

As to quaternary structure, core component of a BCR3 (BTB-CUL3-RBX1) E3 ubiquitin ligase complex, also named Cul3-RING ubiquitin ligase complex CUL3(KBTBD6/7), composed of CUL3, RBX1, KBTBD6 and KBTBD7. Interacts with GABARAP; the interaction is direct and is required for the ubiquitination of TIAM1. Interacts with GABARAPL1, GABARAPL2 and MAP1LC3B; the interaction is direct.

It is found in the cytoplasm. Its subcellular location is the nucleus. It functions in the pathway protein modification; protein ubiquitination. In terms of biological role, as part of the CUL3(KBTBD6/7) E3 ubiquitin ligase complex functions as a substrate adapter for the RAC1 guanine exchange factor (GEF) TIAM1, mediating its 'Lys-48' ubiquitination and proteasomal degradation. By controlling this ubiquitination, regulates RAC1 signal transduction and downstream biological processes including the organization of the cytoskeleton, cell migration and cell proliferation. Ubiquitination of TIAM1 requires the membrane-associated protein GABARAP which may restrict locally the activity of the complex. In Homo sapiens (Human), this protein is Kelch repeat and BTB domain-containing protein 7.